The following is a 344-amino-acid chain: Uroporphyrinogen decarboxylase (344 aa).

Residues 23 to 27, Asp73, Tyr149, Thr204, and His321 each bind substrate; that span reads RQAGR.

The protein belongs to the uroporphyrinogen decarboxylase family. In terms of assembly, homodimer.

Its subcellular location is the cytoplasm. It catalyses the reaction uroporphyrinogen III + 4 H(+) = coproporphyrinogen III + 4 CO2. The protein operates within porphyrin-containing compound metabolism; protoporphyrin-IX biosynthesis; coproporphyrinogen-III from 5-aminolevulinate: step 4/4. In terms of biological role, catalyzes the decarboxylation of four acetate groups of uroporphyrinogen-III to yield coproporphyrinogen-III. The polypeptide is Uroporphyrinogen decarboxylase (Francisella tularensis subsp. novicida (strain U112)).